The sequence spans 152 residues: Protein SprT-like (152 aa).

The 142-residue stretch at 7 to 148 (QRLVEEVSLQ…GKCKGKLNLI (142 aa)) folds into the SprT-like domain. His-67 contributes to the Zn(2+) binding site. Residue Glu-68 is part of the active site. His-71 contacts Zn(2+).

The protein belongs to the SprT family. It depends on Zn(2+) as a cofactor.

The protein resides in the cytoplasm. This Bacillus cereus (strain 03BB102) protein is Protein SprT-like.